The chain runs to 673 residues: Potassium-transporting ATPase ATP-binding subunit (673 aa).

A run of 4 helical transmembrane segments spans residues Ile-34–Leu-54, Val-65–Leu-85, Ile-216–Met-236, and Ile-253–Ile-273. Asp-304 serves as the catalytic 4-aspartylphosphate intermediate. Residues Asp-341, Glu-345, Phe-370–Ser-377, and Lys-388 contribute to the ATP site. Residues Asp-511 and Asp-515 each contribute to the Mg(2+) site. 3 helical membrane-spanning segments follow: residues Phe-581 to Met-601, Ala-609 to Met-629, and Val-649 to Ile-669.

It belongs to the cation transport ATPase (P-type) (TC 3.A.3) family. Type IA subfamily. The system is composed of three essential subunits: KdpA, KdpB and KdpC.

It is found in the cell membrane. The enzyme catalyses K(+)(out) + ATP + H2O = K(+)(in) + ADP + phosphate + H(+). Part of the high-affinity ATP-driven potassium transport (or Kdp) system, which catalyzes the hydrolysis of ATP coupled with the electrogenic transport of potassium into the cytoplasm. This subunit is responsible for energy coupling to the transport system and for the release of the potassium ions to the cytoplasm. The protein is Potassium-transporting ATPase ATP-binding subunit of Staphylococcus epidermidis (strain ATCC 35984 / DSM 28319 / BCRC 17069 / CCUG 31568 / BM 3577 / RP62A).